The following is a 299-amino-acid chain: MASPELELVRELIELNWHTRNGEVEPRRIAYDRAQEAFGNLGVPPGDVVTVGHCTAEWVRPARQDGRTLLYLHGGSYALGSPQSHRHLSSALGDAAGAAVLALHYRRPPESPFPAAVEDAVAAYRMLLEQGCPPGRVTLAGDSAGAGLAVAALQALRDAGTPLPAAAVCISPWADLACEGASHTTRKAREILLDTADLRRMAERYLAGTDPRHPLASPAHGDLTGLPPLLIQVGSEEVLHDDARALEQAALKAGTPVTFEEWPEMFHVWHWYHPVLPEGRRAIEVAGAFLRTATGEGLK.

The Involved in the stabilization of the negatively charged intermediate by the formation of the oxyanion hole signature appears at 73-75; that stretch reads HGG. Active-site residues include S143, E237, and H267.

This sequence belongs to the 'GDXG' lipolytic enzyme family.

It participates in secondary metabolite biosynthesis; bialaphos biosynthesis. Functionally, this protein removes the N-acetyl group from bialaphos as one of the final steps of biosynthesis of phosphinothricin tripeptide (PTT), also known as bialaphos (BA), a natural-product antibiotic and potent herbicide. The chain is Acetyl-hydrolase (bah) from Streptomyces hygroscopicus.